We begin with the raw amino-acid sequence, 326 residues long: 4-hydroxythreonine-4-phosphate dehydrogenase (326 aa).

Residues His-132 and Thr-133 each contribute to the substrate site. A divalent metal cation-binding residues include His-162, His-207, and His-262. 3 residues coordinate substrate: Lys-270, Asn-279, and Arg-288.

It belongs to the PdxA family. In terms of assembly, homodimer. Zn(2+) is required as a cofactor. Requires Mg(2+) as cofactor. It depends on Co(2+) as a cofactor.

Its subcellular location is the cytoplasm. It carries out the reaction 4-(phosphooxy)-L-threonine + NAD(+) = 3-amino-2-oxopropyl phosphate + CO2 + NADH. It participates in cofactor biosynthesis; pyridoxine 5'-phosphate biosynthesis; pyridoxine 5'-phosphate from D-erythrose 4-phosphate: step 4/5. Functionally, catalyzes the NAD(P)-dependent oxidation of 4-(phosphooxy)-L-threonine (HTP) into 2-amino-3-oxo-4-(phosphooxy)butyric acid which spontaneously decarboxylates to form 3-amino-2-oxopropyl phosphate (AHAP). The sequence is that of 4-hydroxythreonine-4-phosphate dehydrogenase from Ruegeria sp. (strain TM1040) (Silicibacter sp.).